A 90-amino-acid polypeptide reads, in one-letter code: Non-structural protein NS-S (90 aa).

It belongs to the hantavirus NS-S protein family.

Its subcellular location is the host cytoplasm. The protein localises to the host perinuclear region. In terms of biological role, antagonizes host type-I IFN signaling pathway. This is Non-structural protein NS-S (N) from Homo sapiens (Human).